Reading from the N-terminus, the 201-residue chain is Methylated-DNA--protein-cysteine methyltransferase (201 aa).

Residues tyrosine 131, glycine 132, and arginine 146 each coordinate DNA. Cysteine 163 acts as the Nucleophile; methyl group acceptor in catalysis.

The protein belongs to the MGMT family.

The protein localises to the nucleus. The enzyme catalyses a 6-O-methyl-2'-deoxyguanosine in DNA + L-cysteinyl-[protein] = S-methyl-L-cysteinyl-[protein] + a 2'-deoxyguanosine in DNA. The catalysed reaction is a 4-O-methyl-thymidine in DNA + L-cysteinyl-[protein] = a thymidine in DNA + S-methyl-L-cysteinyl-[protein]. Its function is as follows. Involved in the cellular defense against the biological effects of O6-methylguanine (O6-MeG) and O4-methylthymine (O4-MeT) in DNA. Repairs the methylated nucleobase in DNA by stoichiometrically transferring the methyl group to a cysteine residue in the enzyme. This is a suicide reaction: the enzyme is irreversibly inactivated. In Lodderomyces elongisporus (strain ATCC 11503 / CBS 2605 / JCM 1781 / NBRC 1676 / NRRL YB-4239) (Yeast), this protein is Methylated-DNA--protein-cysteine methyltransferase (MGT1).